Consider the following 381-residue polypeptide: Chaperone protein DnaJ (381 aa).

The region spanning 5-70 is the J domain; that stretch reads DFYEVLGVSR…QKKAAYDQYG (66 aa). Residues 136–214 form a CR-type zinc finger; it reads GVTKEIEVPT…CHGQGRKQKT (79 aa). Zn(2+) is bound by residues Cys-149, Cys-152, Cys-166, Cys-169, Cys-188, Cys-191, Cys-202, and Cys-205. CXXCXGXG motif repeat units follow at residues 149 to 156, 166 to 173, 188 to 195, and 202 to 209; these read CDSCDGSG, CGTCHGHG, CPTCHGKG, and CNECHGQG.

It belongs to the DnaJ family. In terms of assembly, homodimer. It depends on Zn(2+) as a cofactor.

It localises to the cytoplasm. In terms of biological role, participates actively in the response to hyperosmotic and heat shock by preventing the aggregation of stress-denatured proteins and by disaggregating proteins, also in an autonomous, DnaK-independent fashion. Unfolded proteins bind initially to DnaJ; upon interaction with the DnaJ-bound protein, DnaK hydrolyzes its bound ATP, resulting in the formation of a stable complex. GrpE releases ADP from DnaK; ATP binding to DnaK triggers the release of the substrate protein, thus completing the reaction cycle. Several rounds of ATP-dependent interactions between DnaJ, DnaK and GrpE are required for fully efficient folding. Also involved, together with DnaK and GrpE, in the DNA replication of plasmids through activation of initiation proteins. This chain is Chaperone protein DnaJ, found in Vibrio parahaemolyticus serotype O3:K6 (strain RIMD 2210633).